The sequence spans 162 residues: Superoxide dismutase [Cu-Zn] (162 aa).

The N-terminal stretch at 1 to 20 is a signal peptide; sequence MNKSGIILIGTILFSSMAIA. His66, His68, and His83 together coordinate Cu cation. A disulfide bridge connects residues Cys73 and Cys158. His83, His92, His100, and Asp103 together coordinate Zn(2+). His137 provides a ligand contact to Cu cation.

Belongs to the Cu-Zn superoxide dismutase family. Homodimer. Cu cation serves as cofactor. The cofactor is Zn(2+).

It localises to the periplasm. The enzyme catalyses 2 superoxide + 2 H(+) = H2O2 + O2. Its function is as follows. Destroys radicals which are normally produced within the cells and which are toxic to biological systems. This is Superoxide dismutase [Cu-Zn] (sodC) from Legionella pneumophila.